Reading from the N-terminus, the 124-residue chain is Small ribosomal subunit protein uS12 (124 aa).

Asp89 carries the post-translational modification 3-methylthioaspartic acid.

This sequence belongs to the universal ribosomal protein uS12 family. Part of the 30S ribosomal subunit. Contacts proteins S8 and S17. May interact with IF1 in the 30S initiation complex.

With S4 and S5 plays an important role in translational accuracy. Functionally, interacts with and stabilizes bases of the 16S rRNA that are involved in tRNA selection in the A site and with the mRNA backbone. Located at the interface of the 30S and 50S subunits, it traverses the body of the 30S subunit contacting proteins on the other side and probably holding the rRNA structure together. The combined cluster of proteins S8, S12 and S17 appears to hold together the shoulder and platform of the 30S subunit. The sequence is that of Small ribosomal subunit protein uS12 from Edwardsiella ictaluri (strain 93-146).